The following is a 430-amino-acid chain: GTPase Obg (430 aa).

One can recognise an Obg domain in the interval 1 to 158; the sequence is MFVDQVKISL…LDVSLELKLL (158 aa). The tract at residues 118–145 is disordered; it reads KGGRGGRGNSRFATPRNPAPDFSEKGEP. One can recognise an OBG-type G domain in the interval 159 to 329; it reads ADVGLVGFPS…LLYAIADKLE (171 aa). GTP-binding positions include 165–172, 190–194, 212–215, 282–285, and 310–312; these read GFPSVGKS, FTTIK, DLPG, NKMD, and STI. Residues Ser-172 and Thr-192 each contribute to the Mg(2+) site. In terms of domain architecture, OCT spans 352–430; it reads KHTPSQDKFT…ILGGEFEFVE (79 aa).

Belongs to the TRAFAC class OBG-HflX-like GTPase superfamily. OBG GTPase family. As to quaternary structure, monomer. It depends on Mg(2+) as a cofactor.

It is found in the cytoplasm. Functionally, an essential GTPase which binds GTP, GDP and possibly (p)ppGpp with moderate affinity, with high nucleotide exchange rates and a fairly low GTP hydrolysis rate. Plays a role in control of the cell cycle, stress response, ribosome biogenesis and in those bacteria that undergo differentiation, in morphogenesis control. The sequence is that of GTPase Obg from Staphylococcus aureus (strain MRSA252).